The chain runs to 166 residues: D-aminoacyl-tRNA deacylase (166 aa).

A Gly-cisPro motif, important for rejection of L-amino acids motif is present at residues 142-143 (GP).

Belongs to the DTD family. As to quaternary structure, homodimer.

Its subcellular location is the cytoplasm. It catalyses the reaction glycyl-tRNA(Ala) + H2O = tRNA(Ala) + glycine + H(+). The catalysed reaction is a D-aminoacyl-tRNA + H2O = a tRNA + a D-alpha-amino acid + H(+). Its function is as follows. An aminoacyl-tRNA editing enzyme that deacylates mischarged D-aminoacyl-tRNAs. Also deacylates mischarged glycyl-tRNA(Ala), protecting cells against glycine mischarging by AlaRS. Acts via tRNA-based rather than protein-based catalysis; rejects L-amino acids rather than detecting D-amino acids in the active site. By recycling D-aminoacyl-tRNA to D-amino acids and free tRNA molecules, this enzyme counteracts the toxicity associated with the formation of D-aminoacyl-tRNA entities in vivo and helps enforce protein L-homochirality. The polypeptide is D-aminoacyl-tRNA deacylase (Ralstonia nicotianae (strain ATCC BAA-1114 / GMI1000) (Ralstonia solanacearum)).